We begin with the raw amino-acid sequence, 138 residues long: Flagellar assembly factor FliW (138 aa).

It belongs to the FliW family. In terms of assembly, interacts with translational regulator CsrA and flagellin(s).

It localises to the cytoplasm. Acts as an anti-CsrA protein, binds CsrA and prevents it from repressing translation of its target genes, one of which is flagellin. Binds to flagellin and participates in the assembly of the flagellum. In Symbiobacterium thermophilum (strain DSM 24528 / JCM 14929 / IAM 14863 / T), this protein is Flagellar assembly factor FliW.